We begin with the raw amino-acid sequence, 97 residues long: Large ribosomal subunit protein eL21 (97 aa).

Belongs to the eukaryotic ribosomal protein eL21 family.

This chain is Large ribosomal subunit protein eL21, found in Methanococcus aeolicus (strain ATCC BAA-1280 / DSM 17508 / OCM 812 / Nankai-3).